Reading from the N-terminus, the 487-residue chain is MESPSIGDSLTARMIPRHSSLDSFGAMKVSLLVNLASIRVSKAELRQRVMLPQYLRIAIRDCILRKDDSFDASSSVAPPLENNALTPEVPLMVFVNPKSGGRQGPLIKERLQNLISEEQVYDLTEVKPNEFIRYGLGCLEAFASRGDECAKEIREKMRIVVAGGDGTVGWVLGCLGELNLQNRLPVPPVSIMPLGTGNDLSRSFGWGGSFPFAWKSAIKRTLHRASVAPISRLDSWNILITMPSGEIVDPPYSLKATQECYIDQNLEIEGEIPPSTNGYEGVFYNYFSIGMDAQVAYGFHHLRNEKPYLANGPIANKIIYSGYGCSQGWFLTHCINDPGLRGLKNIMTLHIKKLDSSEWEKVPVPKSVRAVVALNLHSYGSGRNPWGNLKQDYLEKRGFVEAQADDGLLEIFGLKQGWHASFVMVELISAKHIAQAAAIRLEIRGGDWKDAFMQMDGEPWKQPMTRDYSTFVDIKRVPHQSLVVKGD.

Positions 86–242 constitute a DAGKc domain; the sequence is TPEVPLMVFV…LDSWNILITM (157 aa).

The protein belongs to the eukaryotic diacylglycerol kinase family. Monomer. Highly expressed in pollen grains. Expressed in roots, hypocotyls, leaf vasculature, developing anthers and stigmas, and receptacles of siliques.

The protein resides in the endoplasmic reticulum. It is found in the cytoplasm. It localises to the cytosol. The catalysed reaction is a 1,2-diacyl-sn-glycerol + ATP = a 1,2-diacyl-sn-glycero-3-phosphate + ADP + H(+). Phosphorylates the second messenger diacylglycerol (DAG) to generate phosphatidic acid (PA), another important signaling molecule. PA is required for plant development and responses to abiotic stress and pathogen attack. May be involved in the accumulation of PA during cold stress. Involved in the regulation of PA and phosphatidylcholine biosynthesis in growing pollen tubes. Required for nitric oxide-dependent pollen tube growth and re-orientation responses. Functions together with DGK2 in male gametophyte development and biosynthesis of phosphatidylglycerol and phosphatidylinositol in the endoplasmic reticulum (ER). Involved in PA production for pollen grain growth, as well as leaf and root growth. Possesses guanylyl cyclase activity in vitro. The sequence is that of Diacylglycerol kinase 4 from Arabidopsis thaliana (Mouse-ear cress).